Reading from the N-terminus, the 342-residue chain is Phosphoribosylformylglycinamidine cyclo-ligase (342 aa).

It belongs to the AIR synthase family.

It is found in the cytoplasm. The enzyme catalyses 2-formamido-N(1)-(5-O-phospho-beta-D-ribosyl)acetamidine + ATP = 5-amino-1-(5-phospho-beta-D-ribosyl)imidazole + ADP + phosphate + H(+). It functions in the pathway purine metabolism; IMP biosynthesis via de novo pathway; 5-amino-1-(5-phospho-D-ribosyl)imidazole from N(2)-formyl-N(1)-(5-phospho-D-ribosyl)glycinamide: step 2/2. This chain is Phosphoribosylformylglycinamidine cyclo-ligase, found in Staphylococcus aureus (strain bovine RF122 / ET3-1).